Reading from the N-terminus, the 275-residue chain is D-apionate oxidoisomerase (275 aa).

NAD(+)-binding positions include 11 to 13, E32, and D68; that span reads GKM. Positions 113 and 183 each coordinate Zn(2+).

It belongs to the ApnO family. Zn(2+) is required as a cofactor.

It carries out the reaction D-apionate + NAD(+) = 3-oxoisoapionate + NADH + H(+). It participates in carbohydrate metabolism. Its function is as follows. Involved in catabolism of D-apiose. Catalyzes the conversion of D-apionate to 3-oxo-isoapionate. The chain is D-apionate oxidoisomerase from Rhizobium rhizogenes (strain K84 / ATCC BAA-868) (Agrobacterium radiobacter).